The primary structure comprises 993 residues: Chromosome transmission fidelity protein 18 homolog (993 aa).

Residues 26-72 (PDEFNAYDGPSTSKQAAEKQKENRAPVAALRDSTRLGNSTLGSPQLS) are disordered. Residues 60-72 (RLGNSTLGSPQLS) are compositionally biased toward polar residues. 427 to 434 (GPPGLGKT) contributes to the ATP binding site. Positions 892–913 (AAPKGGAPSAPAAKKKTSGAAA) are disordered. Residues 894–913 (PKGGAPSAPAAKKKTSGAAA) show a composition bias toward low complexity.

The protein belongs to the activator 1 small subunits family. CTF18 subfamily. Component of the CTF18-RFC complex.

It localises to the nucleus. In terms of biological role, chromosome cohesion factor involved in sister chromatid cohesion and fidelity of chromosome transmission. Component of one of the cell nuclear antigen loader complexes, CTF18-replication factor C (CTF18-RFC). The CTF18-RFC complex catalyzes the ATP-dependent loading of PCNA onto primed and gapped DNA and has weak ATPase activity. The CTF18-RFC complex catalyzes the ATP-dependent loading of PCNA onto primed and gapped DNA. The sequence is that of Chromosome transmission fidelity protein 18 homolog from Drosophila melanogaster (Fruit fly).